The chain runs to 113 residues: Protein translation factor SUI1 homolog (113 aa).

Residues methionine 1 to glycine 24 are disordered. Serine 2 is subject to N-acetylserine.

The protein belongs to the SUI1 family.

Its function is as follows. Probably involved in translation. The sequence is that of Protein translation factor SUI1 homolog from Brassica oleracea (Wild cabbage).